Here is an 82-residue protein sequence, read N- to C-terminus: U10-myrmicitoxin-Mri1c (82 aa).

The N-terminal stretch at 1–26 is a signal peptide; the sequence is MRLSYVSLTLAIIFVMAIVHAPETEA. A propeptide spanning residues 27-52 is cleaved from the precursor; it reads KAYPEADAVGEASAVGEADAVGVADP. Ile81 carries the post-translational modification Isoleucine amide.

The protein belongs to the formicidae venom precursor-01 superfamily. Expressed by the venom gland.

The protein resides in the secreted. Its function is as follows. Induces paralysis 5 minutes after injection into blowflies (L.caesar). In most cases is not lethal 24 hours after injection, but paralysis is irreversible. May have antimicrobial properties, like most ant linear peptides. This is U10-myrmicitoxin-Mri1c from Manica rubida (European giant red ant).